The following is a 162-amino-acid chain: 3-hydroxyacyl-[acyl-carrier-protein] dehydratase FabZ (162 aa).

The active site involves His49.

This sequence belongs to the thioester dehydratase family. FabZ subfamily.

The protein resides in the cytoplasm. The enzyme catalyses a (3R)-hydroxyacyl-[ACP] = a (2E)-enoyl-[ACP] + H2O. Involved in unsaturated fatty acids biosynthesis. Catalyzes the dehydration of short chain beta-hydroxyacyl-ACPs and long chain saturated and unsaturated beta-hydroxyacyl-ACPs. The polypeptide is 3-hydroxyacyl-[acyl-carrier-protein] dehydratase FabZ (Solibacter usitatus (strain Ellin6076)).